Here is a 663-residue protein sequence, read N- to C-terminus: DNA topoisomerase 4 subunit B (663 aa).

ATP contacts are provided by residues Y7, N47, D74, 114–120 (GLHGVGA), and K341. The tract at residues 386 to 416 (REAARKAREDARSGKKNKRKDTLLSGKLTPA) is disordered. Residues 387 to 398 (EAARKAREDARS) show a composition bias toward basic and acidic residues. Positions 424–538 (NELYLVEGDS…AGRVFIALPP (115 aa)) constitute a Toprim domain. Mg(2+) is bound by residues E430, D503, and D505.

Belongs to the type II topoisomerase family. ParE type 2 subfamily. As to quaternary structure, heterotetramer composed of ParC and ParE. Mg(2+) is required as a cofactor. Requires Mn(2+) as cofactor. Ca(2+) serves as cofactor.

The catalysed reaction is ATP-dependent breakage, passage and rejoining of double-stranded DNA.. Functionally, topoisomerase IV is essential for chromosome segregation. It relaxes supercoiled DNA. Performs the decatenation events required during the replication of a circular DNA molecule. The chain is DNA topoisomerase 4 subunit B from Staphylococcus aureus (strain NCTC 8325 / PS 47).